Here is a 341-residue protein sequence, read N- to C-terminus: Ribose-phosphate pyrophosphokinase 5 (341 aa).

Mg(2+) is bound by residues D152, H154, and D167.

The protein belongs to the ribose-phosphate pyrophosphokinase family.

It is found in the cytoplasm. It carries out the reaction D-ribose 5-phosphate + ATP = 5-phospho-alpha-D-ribose 1-diphosphate + AMP + H(+). It participates in metabolic intermediate biosynthesis; 5-phospho-alpha-D-ribose 1-diphosphate biosynthesis; 5-phospho-alpha-D-ribose 1-diphosphate from D-ribose 5-phosphate (route I): step 1/1. Its function is as follows. 5-phosphoribose 1-diphosphate synthase involved in nucleotide, histidine, and tryptophan biosynthesis. Active in heteromultimeric complexes with other 5-phosphoribose 1-diphosphate synthases. The sequence is that of Ribose-phosphate pyrophosphokinase 5 from Schizosaccharomyces pombe (strain 972 / ATCC 24843) (Fission yeast).